Consider the following 371-residue polypeptide: Transcription termination/antitermination protein NusA (371 aa).

Residues E135–T199 form the S1 motif domain. The region spanning E301 to A367 is the KH domain. Positions G347–E371 are disordered. A compositionally biased stretch (acidic residues) spans L353–E371.

It belongs to the NusA family. In terms of assembly, monomer. Binds directly to the core enzyme of the DNA-dependent RNA polymerase and to nascent RNA.

The protein localises to the cytoplasm. Its function is as follows. Participates in both transcription termination and antitermination. The polypeptide is Transcription termination/antitermination protein NusA (Bacillus subtilis (strain 168)).